Reading from the N-terminus, the 284-residue chain is Shikimate dehydrogenase (NADP(+)) (284 aa).

Shikimate is bound by residues 19–21 (SFS) and threonine 66. Lysine 70 serves as the catalytic Proton acceptor. Aspartate 82 contacts NADP(+). Shikimate-binding residues include asparagine 91 and aspartate 106. Residues 130–134 (GSGGS) and isoleucine 226 contribute to the NADP(+) site. Tyrosine 228 is a binding site for shikimate. Glycine 249 is an NADP(+) binding site.

It belongs to the shikimate dehydrogenase family. As to quaternary structure, homodimer.

It catalyses the reaction shikimate + NADP(+) = 3-dehydroshikimate + NADPH + H(+). It participates in metabolic intermediate biosynthesis; chorismate biosynthesis; chorismate from D-erythrose 4-phosphate and phosphoenolpyruvate: step 4/7. In terms of biological role, involved in the biosynthesis of the chorismate, which leads to the biosynthesis of aromatic amino acids. Catalyzes the reversible NADPH linked reduction of 3-dehydroshikimate (DHSA) to yield shikimate (SA). This Methanococcus vannielii (strain ATCC 35089 / DSM 1224 / JCM 13029 / OCM 148 / SB) protein is Shikimate dehydrogenase (NADP(+)).